The sequence spans 130 residues: Small ribosomal subunit protein uS11 (130 aa).

The protein belongs to the universal ribosomal protein uS11 family. Part of the 30S ribosomal subunit. Interacts with proteins S7 and S18. Binds to IF-3.

In terms of biological role, located on the platform of the 30S subunit, it bridges several disparate RNA helices of the 16S rRNA. Forms part of the Shine-Dalgarno cleft in the 70S ribosome. This is Small ribosomal subunit protein uS11 from Prochlorococcus marinus (strain MIT 9215).